A 101-amino-acid chain; its full sequence is MAMTLRDMDAVRPVNREAVDRHKARMRDEVRAFRLRELRAAQSLTQVQVAALAHIRQSRVSSIENGDIGSAQVNTLRKYVSALGGELDITVRLGDETFTLA.

An HTH cro/C1-type domain is found at 35-90 (LRELRAAQSLTQVQVAALAHIRQSRVSSIENGDIGSAQVNTLRKYVSALGGELDIT). Residues 46-65 (QVQVAALAHIRQSRVSSIEN) constitute a DNA-binding region (H-T-H motif).

In terms of biological role, putative antitoxin component of a type II toxin-antitoxin (TA) system. Its cognate toxin would be HigB2. In Mycobacterium tuberculosis (strain ATCC 25618 / H37Rv), this protein is Putative antitoxin HigA2.